The chain runs to 305 residues: Aspartate carbamoyltransferase catalytic subunit (305 aa).

The carbamoyl phosphate site is built by Arg-56 and Thr-57. Lys-85 is an L-aspartate binding site. Positions 106, 134, and 137 each coordinate carbamoyl phosphate. The L-aspartate site is built by Arg-167 and Arg-227. Positions 266 and 267 each coordinate carbamoyl phosphate.

The protein belongs to the aspartate/ornithine carbamoyltransferase superfamily. ATCase family. In terms of assembly, heterooligomer of catalytic and regulatory chains.

The catalysed reaction is carbamoyl phosphate + L-aspartate = N-carbamoyl-L-aspartate + phosphate + H(+). The protein operates within pyrimidine metabolism; UMP biosynthesis via de novo pathway; (S)-dihydroorotate from bicarbonate: step 2/3. Catalyzes the condensation of carbamoyl phosphate and aspartate to form carbamoyl aspartate and inorganic phosphate, the committed step in the de novo pyrimidine nucleotide biosynthesis pathway. The polypeptide is Aspartate carbamoyltransferase catalytic subunit (Thermoplasma volcanium (strain ATCC 51530 / DSM 4299 / JCM 9571 / NBRC 15438 / GSS1)).